The primary structure comprises 237 residues: DNA repair protein RecO (237 aa).

It belongs to the RecO family.

Functionally, involved in DNA repair and RecF pathway recombination. In Flavobacterium johnsoniae (strain ATCC 17061 / DSM 2064 / JCM 8514 / BCRC 14874 / CCUG 350202 / NBRC 14942 / NCIMB 11054 / UW101) (Cytophaga johnsonae), this protein is DNA repair protein RecO.